We begin with the raw amino-acid sequence, 473 residues long: NADH-quinone oxidoreductase subunit N (473 aa).

14 helical membrane passes run 3 to 23 (LHYL…LVIA), 30 to 50 (LAFY…CSLL), 62 to 82 (FSSM…FLWL), 99 to 119 (FYLL…SEHF), 120 to 140 (ASFF…IAYS), 153 to 173 (YLIL…IVYL), 195 to 215 (MLFT…LSLV), 230 to 252 (LPTT…WKLF), 262 to 282 (IVLT…NLLA), 291 to 311 (ILAF…FLFN), 326 to 346 (ALLF…SILM), 368 to 388 (AASL…LGFM), 408 to 428 (FLVI…MVML), and 444 to 464 (VASL…PALF).

This sequence belongs to the complex I subunit 2 family. NDH-1 is composed of 13 different subunits. Subunits NuoA, H, J, K, L, M, N constitute the membrane sector of the complex.

It is found in the cell inner membrane. It catalyses the reaction a quinone + NADH + 5 H(+)(in) = a quinol + NAD(+) + 4 H(+)(out). In terms of biological role, NDH-1 shuttles electrons from NADH, via FMN and iron-sulfur (Fe-S) centers, to quinones in the respiratory chain. The immediate electron acceptor for the enzyme in this species is believed to be ubiquinone. Couples the redox reaction to proton translocation (for every two electrons transferred, four hydrogen ions are translocated across the cytoplasmic membrane), and thus conserves the redox energy in a proton gradient. The sequence is that of NADH-quinone oxidoreductase subunit N from Shewanella woodyi (strain ATCC 51908 / MS32).